We begin with the raw amino-acid sequence, 258 residues long: Aspartate/glutamate leucyltransferase (258 aa).

It belongs to the R-transferase family. Bpt subfamily.

The protein resides in the cytoplasm. It carries out the reaction N-terminal L-glutamyl-[protein] + L-leucyl-tRNA(Leu) = N-terminal L-leucyl-L-glutamyl-[protein] + tRNA(Leu) + H(+). The catalysed reaction is N-terminal L-aspartyl-[protein] + L-leucyl-tRNA(Leu) = N-terminal L-leucyl-L-aspartyl-[protein] + tRNA(Leu) + H(+). Its function is as follows. Functions in the N-end rule pathway of protein degradation where it conjugates Leu from its aminoacyl-tRNA to the N-termini of proteins containing an N-terminal aspartate or glutamate. This is Aspartate/glutamate leucyltransferase from Rhodopseudomonas palustris (strain ATCC BAA-98 / CGA009).